Reading from the N-terminus, the 282-residue chain is Undecaprenyl-diphosphatase (282 aa).

Helical transmembrane passes span 40 to 60 (GAAF…IYFF), 85 to 105 (AKMG…GLLF), 117 to 137 (YWIS…EWLI), 158 to 178 (ALII…RSGV), 193 to 213 (AARF…IYQL), 231 to 251 (IVAT…LITF), and 258 to 278 (AVFI…IATG).

The protein belongs to the UppP family.

Its subcellular location is the cell inner membrane. The enzyme catalyses di-trans,octa-cis-undecaprenyl diphosphate + H2O = di-trans,octa-cis-undecaprenyl phosphate + phosphate + H(+). Catalyzes the dephosphorylation of undecaprenyl diphosphate (UPP). Confers resistance to bacitracin. The sequence is that of Undecaprenyl-diphosphatase from Prosthecochloris aestuarii (strain DSM 271 / SK 413).